The following is a 482-amino-acid chain: Histone deacetylase 1 (482 aa).

Residues 9-321 (RKVCYYYDGD…WTYETAVALD (313 aa)) form a histone deacetylase region. 1D-myo-inositol 1,4,5,6-tetrakisphosphate-binding residues include glycine 27 and lysine 31. At lysine 74 the chain carries N6-acetyllysine; alternate. Lysine 74 participates in a covalent cross-link: Glycyl lysine isopeptide (Lys-Gly) (interchain with G-Cter in SUMO2); alternate. Residue histidine 141 is part of the active site. Residues aspartate 176 and histidine 178 each contribute to the Zn(2+) site. Residue lysine 220 is modified to N6-acetyllysine. Cysteine 261 carries the post-translational modification S-nitrosocysteine. Aspartate 264 provides a ligand contact to Zn(2+). Arginine 270 contributes to the 1D-myo-inositol 1,4,5,6-tetrakisphosphate binding site. At cysteine 273 the chain carries S-nitrosocysteine. The span at 390–400 (PEESGDEDEED) shows a compositional bias: acidic residues. Positions 390-482 (PEESGDEDEE…KGVKEEVKMA (93 aa)) are disordered. 5 positions are modified to phosphoserine: serine 393, serine 406, serine 409, serine 421, and serine 423. Residues 401-416 (PDKRISICSSDKRIAC) show a composition bias toward basic and acidic residues. The segment covering 417-427 (EEEFSDSDEEG) has biased composition (acidic residues). The residue at position 432 (lysine 432) is an N6-methylated lysine; by EHMT2. Residue lysine 438 forms a Glycyl lysine isopeptide (Lys-Gly) (interchain with G-Cter in SUMO2) linkage. Residues 443–482 (VKTEDEKEKDPEEKKEVTEEEKTKEEKPEAKGVKEEVKMA) show a composition bias toward basic and acidic residues. Lysine 444 is covalently cross-linked (Glycyl lysine isopeptide (Lys-Gly) (interchain with G-Cter in SUMO2); alternate). Residue lysine 444 forms a Glycyl lysine isopeptide (Lys-Gly) (interchain with G-Cter in SUMO); alternate linkage. Residues lysine 456, lysine 457, and lysine 473 each participate in a glycyl lysine isopeptide (Lys-Gly) (interchain with G-Cter in SUMO2) cross-link. Residue lysine 476 forms a Glycyl lysine isopeptide (Lys-Gly) (interchain with G-Cter in SUMO2); alternate linkage. Lysine 476 is covalently cross-linked (Glycyl lysine isopeptide (Lys-Gly) (interchain with G-Cter in SUMO); alternate). Lysine 480 participates in a covalent cross-link: Glycyl lysine isopeptide (Lys-Gly) (interchain with G-Cter in SUMO2).

Belongs to the histone deacetylase family. HD type 1 subfamily. As to quaternary structure, part of the core histone deacetylase (HDAC) complex composed of HDAC1, HDAC2, RBBP4 and RBBP7, the core complex associates with SIN3, SAP18 and SAP30 to form the SIN3 HDAC complex. Component of the nucleosome remodeling and deacetylase (NuRD) repressor complex, composed of core proteins MTA1, MTA2, MTA3, RBBP4, RBBP7, HDAC1, HDAC2, MBD2, MBD3, and peripherally associated proteins CDK2AP1, CDK2AP2, GATAD2A, GATAD2B, CHD3, CHD4 and CHD5. The exact stoichiometry of the NuRD complex is unknown, and some subunits such as MBD2 and MBD3, GATAD2A and GATAD2B, and CHD3, CHD4 and CHD5 define mutually exclusive NuRD complexes. Component of a BHC histone deacetylase complex that contains HDAC1, HDAC2, HMG20B/BRAF35, KDM1A, RCOR1/CoREST and PHF21A/BHC80. The BHC complex may also contain ZMYM2, ZNF217, ZMYM3, GSE1 and GTF2I. Component of a mSin3A corepressor complex that contains SIN3A, SAP130, SUDS3/SAP45, ARID4B/SAP180, HDAC1 and HDAC2. Found in a trimeric complex with APBB1 and TSHZ3; the interaction between HDAC1 and APBB1 is mediated by TSHZ3. Forms a complex comprising APPL1, RUVBL2, APPL2, CTNNB1 and HDAC2. Component of a RCOR/GFI/KDM1A/HDAC complex. Part of a complex composed of TRIM28, HDAC1, HDAC2 and EHMT2. Part of a complex containing at least CDYL, MIER1, MIER2, HDAC1 and HDAC2. The large PER complex involved in the histone deacetylation is composed of at least HDAC1, PER2, SFPQ and SIN3A. Associates with the 9-1-1 complex; interacts with HUS1. Found in a complex with DNMT3A and HDAC7. Found in a complex with YY1, SIN3A and GON4L. Identified in a histone deacetylase complex that contains DNTTIP1, HDAC1 and MIDEAS; this complex assembles into a tetramer that contains four copies of each protein chain. Found in a complex composed of at least SINHCAF, SIN3A, HDAC1, SAP30, RBBP4, OGT and TET1. Component of the SIN3B complex, which includes SIN3B, HDAC1, PHF12 and MORF4L1. Interacts with GFI1; the interaction is direct. Interacts directly with GFI1B. Interacts with TSHZ3 (via N-terminus); the interaction is direct. Interacts with APEX1; the interaction is not dependent on the acetylated status of APEX1. Interacts with BANP. Interacts with BAZ2A/TIP5. Interacts with BCL6. Interacts with BCOR. Interacts with BHLHE40/DEC1. Interacts with BRCC3; this interaction is enhanced in the presence of PWWP2B. Interacts with BRMS1. Interacts with BRMS1L. Interacts with C10orf90/FATS (via its N-terminal); the interaction prevents binding of HDAC1 to CDKN1A/p21 and facilitates the acetylation and stabilization of CDKN1A/p21. Interacts with CBFA2T3. Interacts with CCAR2. Interacts with CDK2AP1. Interacts with CHD3. Interacts with CHD4. Interacts with CHFR. Interacts with CIART. Interacts with CDKN1A/p21. Interacts with CDK5 complexed to CDK5R1 (p25). Interacts with CRY1. Interacts with DAXX. Interacts with DDIT3/CHOP. Interacts with DDX5. Interacts with DHX36; this interaction occurs in a RNA-dependent manner. Interacts with DNMT1. Interacts with DNTTIP1. Interacts with E4F1. Interacts with EP300. Interacts with ERCC6. Interacts with GATAD2A. Interacts with HCFC1. Interacts with HDAC9. Interacts with HUS1. Interacts with INSM1. Interacts with KDM4A. Interacts with KDM5A; this interaction impairs histone deacetylation. Interacts with KDM5B. Interacts with KLF1. Interacts with MBD3L2. Interacts with MIER1. Interacts with NFE4. Interacts with NR4A2/NURR1. Interacts with NR1D2 (via C-terminus). Interacts with NRIP1. Interacts with NSD2. Interacts with PACS2. Interacts with PHB2. Interacts with PPHLN1. Interacts with PRDM6. Interacts with PRDM16. Interacts with PWWP2A in a MTA1-dependent manner. Interacts with PWWP2B. Interacts with RB1. Interacts with RERE. Interacts with SANBR (via the BTB domain). Interacts with SAMSN1. Interacts with SAP30L. Interacts with SETDB1. Interacts with SIN3A. Interacts with SMAD3. Interacts with SMAD4; positively regulated by ZBTB7A. Interacts with SMARCAD1. Interacts with SMARCA4/BRG1. Interacts with SMYD2. Interacts with SMYD4 (via MYND-type zinc finger). Interacts with SP1; the interaction deacetylates SP1 and regulates its transcriptional activity. Interacts with SP3; the interaction deacetylates SP3 and regulates its transcriptional activity. In vitro, C(18) ceramides increase this interaction and the subsequent SP3 deacetylation and SP3-mediated repression of the TERT promoter. Interacts with SPEN/MINT. Interacts with SPHK2. Interacts with SUV39H1. Interacts with TGIF. Interacts with TGIF2. Interacts with TRAF6. Interacts with TRIM28; the interaction recruits HDAC1 to E2F1 and inhibits its acetylation. Interacts with TSC22D3 isoform 1; this interaction affects HDAC1 activity on MYOG promoter and thus inhibits MYOD1 transcriptional activity. Interacts with UHRF1. Interacts with UHRF2. Interacts with ZBTB7A. Interacts with ZMYND8. Interacts with ZMYND15. Interacts with ZNF431. Interacts with ZNF516; this interaction is enhanced in the presence of PWWP2B. Interacts with ZNF541. Interacts with ZNF638. Interacts with ZNHIT1. Interacts with the non-histone region of MACROH2A1. Identified in a complex with HDAC2, KCTD19, DNTTIP1 and ZNF541. Interacts with MSX3. Interacts with VRK1. It depends on Zn(2+) as a cofactor. In terms of processing, sumoylated on Lys-444 and Lys-476; which promotes enzymatic activity. Desumoylated by SENP1. Post-translationally, phosphorylation on Ser-421 and Ser-423 promotes enzymatic activity and interactions with NuRD and SIN3 complexes. Phosphorylated by CDK5. Ubiquitinated by CHFR and KCTD11, leading to its degradation by the proteasome.

It is found in the nucleus. The enzyme catalyses N(6)-acetyl-L-lysyl-[histone] + H2O = L-lysyl-[histone] + acetate. It catalyses the reaction N(6)-acetyl-L-lysyl-[protein] + H2O = L-lysyl-[protein] + acetate. It carries out the reaction N(6)-(2E)-butenoyl-L-lysyl-[protein] + H2O = (2E)-2-butenoate + L-lysyl-[protein]. The catalysed reaction is N(6)-[(S)-lactoyl]-L-lysyl-[protein] + H2O = (S)-lactate + L-lysyl-[protein]. Its activity is regulated as follows. Inositol tetraphosphate (1D-myo-inositol 1,4,5,6-tetrakisphosphate) may act as an intermolecular glue between HDAC1 and N-Cor repressor complex components. Its function is as follows. Histone deacetylase that catalyzes the deacetylation of lysine residues on the N-terminal part of the core histones (H2A, H2B, H3 and H4). Histone deacetylation gives a tag for epigenetic repression and plays an important role in transcriptional regulation, cell cycle progression and developmental events. Histone deacetylases act via the formation of large multiprotein complexes. Acts as a component of the histone deacetylase NuRD complex which participates in the remodeling of chromatin. As part of the SIN3B complex is recruited downstream of the constitutively active genes transcriptional start sites through interaction with histones and mitigates histone acetylation and RNA polymerase II progression within transcribed regions contributing to the regulation of transcription. Also functions as a deacetylase for non-histone targets, such as NR1D2, RELA, SP1, SP3, STAT3 and TSHZ3. Deacetylates SP proteins, SP1 and SP3, and regulates their function. Component of the BRG1-RB1-HDAC1 complex, which negatively regulates the CREST-mediated transcription in resting neurons. Upon calcium stimulation, HDAC1 is released from the complex and CREBBP is recruited, which facilitates transcriptional activation. Deacetylates TSHZ3 and regulates its transcriptional repressor activity. Deacetylates 'Lys-310' in RELA and thereby inhibits the transcriptional activity of NF-kappa-B. Deacetylates NR1D2 and abrogates the effect of KAT5-mediated relieving of NR1D2 transcription repression activity. Component of a RCOR/GFI/KDM1A/HDAC complex that suppresses, via histone deacetylase (HDAC) recruitment, a number of genes implicated in multilineage blood cell development. Involved in CIART-mediated transcriptional repression of the circadian transcriptional activator: CLOCK-BMAL1 heterodimer. Required for the transcriptional repression of circadian target genes, such as PER1, mediated by the large PER complex or CRY1 through histone deacetylation. In addition to protein deacetylase activity, also has protein-lysine deacylase activity: acts as a protein decrotonylase and delactylase by mediating decrotonylation ((2E)-butenoyl) and delactylation (lactoyl) of histones, respectively. This Rattus norvegicus (Rat) protein is Histone deacetylase 1 (Hdac1).